The sequence spans 220 residues: MSIGYKDNLMSTILAKDRKCEFPINFECSPSQITLMPEMFSFNNERKYQTLIPLMKTSHLIDDDLKDKLNKCAFDFFSGKQANRTSDGTISRLTASGKTSPILPLQNINIVKAENTGNGKSDPYSSIKISKPTKTVIKLKSTKTNTAGQRTRHFCKICSTGFTTSGHLSRHNRIHTGEKNHICPHEGCGQRFSRHDNCNQHYRTHANKKKRNWKRREASS.

C2H2-type zinc fingers lie at residues 153–175 (HFCKICSTGFTTSGHLSRHNRIH) and 181–205 (HICPHEGCGQRFSRHDNCNQHYRTH).

The protein resides in the nucleus. In terms of biological role, transcriptional repressor. This Saccharomyces cerevisiae (strain ATCC 204508 / S288c) (Baker's yeast) protein is Probable transcriptional regulator NRG2 (NRG2).